The following is a 511-amino-acid chain: GMP synthase [glutamine-hydrolyzing] (511 aa).

One can recognise a Glutamine amidotransferase type-1 domain in the interval 5-195 (AILVLDFGSQ…VFKICQAQIN (191 aa)). Catalysis depends on Cys82, which acts as the Nucleophile. Active-site residues include His169 and Glu171. Positions 196–386 (WSLEGNLETI…LGIKKESLYR (191 aa)) constitute a GMPS ATP-PPase domain. 223–229 (SGGTDSL) is an ATP binding site.

In terms of assembly, homodimer.

The enzyme catalyses XMP + L-glutamine + ATP + H2O = GMP + L-glutamate + AMP + diphosphate + 2 H(+). Its pathway is purine metabolism; GMP biosynthesis; GMP from XMP (L-Gln route): step 1/1. Catalyzes the synthesis of GMP from XMP. The protein is GMP synthase [glutamine-hydrolyzing] (guaA) of Borreliella burgdorferi (strain ATCC 35210 / DSM 4680 / CIP 102532 / B31) (Borrelia burgdorferi).